A 425-amino-acid chain; its full sequence is Glutamate-1-semialdehyde 2,1-aminomutase (425 aa).

K265 carries the post-translational modification N6-(pyridoxal phosphate)lysine.

This sequence belongs to the class-III pyridoxal-phosphate-dependent aminotransferase family. HemL subfamily. Homodimer. It depends on pyridoxal 5'-phosphate as a cofactor.

It localises to the cytoplasm. The catalysed reaction is (S)-4-amino-5-oxopentanoate = 5-aminolevulinate. The protein operates within porphyrin-containing compound metabolism; protoporphyrin-IX biosynthesis; 5-aminolevulinate from L-glutamyl-tRNA(Glu): step 2/2. The chain is Glutamate-1-semialdehyde 2,1-aminomutase from Clostridium perfringens (strain 13 / Type A).